Here is a 387-residue protein sequence, read N- to C-terminus: Lipid-A-disaccharide synthase (387 aa).

Belongs to the LpxB family.

The catalysed reaction is a lipid X + a UDP-2-N,3-O-bis[(3R)-3-hydroxyacyl]-alpha-D-glucosamine = a lipid A disaccharide + UDP + H(+). It functions in the pathway bacterial outer membrane biogenesis; LPS lipid A biosynthesis. In terms of biological role, condensation of UDP-2,3-diacylglucosamine and 2,3-diacylglucosamine-1-phosphate to form lipid A disaccharide, a precursor of lipid A, a phosphorylated glycolipid that anchors the lipopolysaccharide to the outer membrane of the cell. The sequence is that of Lipid-A-disaccharide synthase from Nitrosococcus oceani (strain ATCC 19707 / BCRC 17464 / JCM 30415 / NCIMB 11848 / C-107).